The sequence spans 115 residues: MRHSKTAISFFILVAVLGSQAGLIQDTVKEDRPFNPTIIHQGFQDSSDCCFSYASQIPCSRFIYYFPTSGGCTKPGIIFVTRKRKRVCANPSDQRVQTCISTLKLGPRSGNSAIA.

A signal peptide spans 1–21 (MRHSKTAISFFILVAVLGSQA). 3 disulfide bridges follow: C49–C72, C50–C88, and C59–C99.

It belongs to the intercrine beta (chemokine CC) family.

It is found in the secreted. The protein is C-C motif chemokine 6 (Ccl6) of Rattus norvegicus (Rat).